A 438-amino-acid polypeptide reads, in one-letter code: Glutamyl-tRNA(Gln) amidotransferase subunit D (438 aa).

An Asparaginase/glutaminase domain is found at 92-422 (PEVTIIGTGG…EEVRKMMLTN (331 aa)). Residues T102, T178, D179, and K256 contribute to the active site.

This sequence belongs to the asparaginase 1 family. GatD subfamily. Heterodimer of GatD and GatE.

It catalyses the reaction L-glutamyl-tRNA(Gln) + L-glutamine + ATP + H2O = L-glutaminyl-tRNA(Gln) + L-glutamate + ADP + phosphate + H(+). In terms of biological role, allows the formation of correctly charged Gln-tRNA(Gln) through the transamidation of misacylated Glu-tRNA(Gln) in organisms which lack glutaminyl-tRNA synthetase. The reaction takes place in the presence of glutamine and ATP through an activated gamma-phospho-Glu-tRNA(Gln). The GatDE system is specific for glutamate and does not act on aspartate. The chain is Glutamyl-tRNA(Gln) amidotransferase subunit D from Pyrococcus abyssi (strain GE5 / Orsay).